We begin with the raw amino-acid sequence, 306 residues long: Peroxisome biogenesis factor 2 (306 aa).

Over 1–15 (MAASENNMEEINPVL) the chain is Peroxisomal matrix. The chain crosses the membrane as a helical span at residues 16-42 (RISQLDAIELNKALEQLIWSQFSSCFQ). Topologically, residues 43 to 48 (GFKPGL) are cytoplasmic. Residues 49 to 74 (LTRFEPEIKASLCLFLWRYTIYTKNA) form a helical membrane-spanning segment. The Peroxisomal matrix portion of the chain corresponds to 75–98 (TVGQTILNMQYKNDLAVTKKYRPL). The chain crosses the membrane as a helical span at residues 99 to 125 (NKQQKVWFALFLVGGKWLEERSFDLFS). Residues 126–134 (NHPFGASFQ) are Cytoplasmic-facing. The chain crosses the membrane as a helical span at residues 135-161 (RTKYFLNAISGLLKFGALLNFLIFLQQ). The Peroxisomal matrix portion of the chain corresponds to 162 to 188 (GKFATLTERLLGIRSVFSRPQDVRQVG). A helical membrane pass occupies residues 189 to 212 (FEYMNREILWHGFAEFLIFLLPLI). Topologically, residues 213 to 306 (NTQKLKSKLF…KIEISEVHTL (94 aa)) are cytoplasmic. Zn(2+) contacts are provided by Cys-245, Cys-248, Cys-260, His-262, Cys-265, Cys-268, Cys-281, and Cys-284. The RING-type zinc finger occupies 245-285 (CCLCGEWPAMPHTIGCSHVFCYYCIKSNYMSDMYFTCPKCS).

The protein belongs to the pex2/pex10/pex12 family. In terms of assembly, component of the PEX2-PEX10-PEX12 retrotranslocation channel.

It localises to the peroxisome membrane. It catalyses the reaction [E2 ubiquitin-conjugating enzyme]-S-ubiquitinyl-L-cysteine + [acceptor protein]-L-cysteine = [E2 ubiquitin-conjugating enzyme]-L-cysteine + [acceptor protein]-S-ubiquitinyl-L-cysteine.. It carries out the reaction S-ubiquitinyl-[E2 ubiquitin-conjugating enzyme]-L-cysteine + [acceptor protein]-L-lysine = [E2 ubiquitin-conjugating enzyme]-L-cysteine + N(6)-ubiquitinyl-[acceptor protein]-L-lysine.. The protein operates within protein modification; protein ubiquitination. Its function is as follows. E3 ubiquitin-protein ligase component of a retrotranslocation channel required for peroxisome organization by mediating export of the PEX5 receptor from peroxisomes to the cytosol, thereby promoting PEX5 recycling. The retrotranslocation channel is composed of PEX2, PEX10 and PEX12; each subunit contributing transmembrane segments that coassemble into an open channel that specifically allows the passage of PEX5 through the peroxisomal membrane. PEX2 also regulates peroxisome organization by acting as a E3 ubiquitin-protein ligase. This chain is Peroxisome biogenesis factor 2, found in Xenopus laevis (African clawed frog).